The primary structure comprises 816 residues: Bifunctional aspartokinase/homoserine dehydrogenase (816 aa).

An aspartokinase region spans residues 1–250 (MKLLKFGGTS…VPNARLLKSI (250 aa)). The interval 251–471 (SYQEAMELSY…FNKKTIHMFL (221 aa)) is interface. In terms of domain architecture, ACT spans 402-479 (IVGSNIYKKH…FLIGIGGIGS (78 aa)). Positions 472–816 (IGIGGIGSTL…VFSDLLRTLS (345 aa)) are homoserine dehydrogenase. Residues Gly-476, Ile-477, and Ala-505 each contribute to the NAD(+) site. An NADP(+)-binding site is contributed by Ile-477. Position 477 (Ile-477) interacts with NADPH. NADP(+)-binding residues include Lys-508 and Thr-556. Thr-556 serves as a coordination point for NAD(+). Positions 556, 557, 578, and 580 each coordinate NADPH. 2 residues coordinate NADP(+): Ser-578 and Lys-580. Residues Glu-607, Val-610, Ala-612, and Leu-614 each contribute to the Na(+) site. The NADP(+) site is built by Gly-665 and Glu-668. The L-homoserine site is built by Glu-668 and Asp-679. Lys-683 functions as the Proton donor in the catalytic mechanism. Position 799 (Gly-799) interacts with NAD(+). Gly-799 provides a ligand contact to NADP(+). Residue Gly-799 participates in NADPH binding.

This sequence in the N-terminal section; belongs to the aspartokinase family. In the C-terminal section; belongs to the homoserine dehydrogenase family. In terms of assembly, homotetramer. A metal cation serves as cofactor.

The catalysed reaction is L-homoserine + NADP(+) = L-aspartate 4-semialdehyde + NADPH + H(+). It catalyses the reaction L-homoserine + NAD(+) = L-aspartate 4-semialdehyde + NADH + H(+). It carries out the reaction L-aspartate + ATP = 4-phospho-L-aspartate + ADP. The protein operates within amino-acid biosynthesis; L-lysine biosynthesis via DAP pathway; (S)-tetrahydrodipicolinate from L-aspartate: step 1/4. Its pathway is amino-acid biosynthesis; L-methionine biosynthesis via de novo pathway; L-homoserine from L-aspartate: step 1/3. It participates in amino-acid biosynthesis; L-methionine biosynthesis via de novo pathway; L-homoserine from L-aspartate: step 3/3. It functions in the pathway amino-acid biosynthesis; L-threonine biosynthesis; L-threonine from L-aspartate: step 1/5. The protein operates within amino-acid biosynthesis; L-threonine biosynthesis; L-threonine from L-aspartate: step 3/5. In terms of biological role, bifunctional aspartate kinase and homoserine dehydrogenase that catalyzes the first and the third steps toward the synthesis of lysine, methionine and threonine from aspartate. The polypeptide is Bifunctional aspartokinase/homoserine dehydrogenase (thrA) (Buchnera aphidicola subsp. Acyrthosiphon pisum (strain APS) (Acyrthosiphon pisum symbiotic bacterium)).